The sequence spans 92 residues: Acylphosphatase (92 aa).

Positions 5-92 (ATAAYVYGVV…TDYKGFTIRY (88 aa)) constitute an Acylphosphatase-like domain. Residues arginine 20 and asparagine 38 contribute to the active site.

The protein belongs to the acylphosphatase family.

It catalyses the reaction an acyl phosphate + H2O = a carboxylate + phosphate + H(+). This chain is Acylphosphatase (acyP), found in Pectobacterium atrosepticum (strain SCRI 1043 / ATCC BAA-672) (Erwinia carotovora subsp. atroseptica).